The primary structure comprises 236 residues: Pyridoxine 5'-phosphate synthase (236 aa).

A 3-amino-2-oxopropyl phosphate-binding site is contributed by asparagine 6. Residue 8-9 (DH) coordinates 1-deoxy-D-xylulose 5-phosphate. Arginine 17 lines the 3-amino-2-oxopropyl phosphate pocket. Histidine 42 acts as the Proton acceptor in catalysis. The 1-deoxy-D-xylulose 5-phosphate site is built by arginine 44 and histidine 49. Residue glutamate 69 is the Proton acceptor of the active site. Threonine 99 contributes to the 1-deoxy-D-xylulose 5-phosphate binding site. The active-site Proton donor is the histidine 190. 3-amino-2-oxopropyl phosphate contacts are provided by residues glycine 191 and 212 to 213 (GH).

Belongs to the PNP synthase family. As to quaternary structure, homooctamer; tetramer of dimers.

The protein localises to the cytoplasm. It carries out the reaction 3-amino-2-oxopropyl phosphate + 1-deoxy-D-xylulose 5-phosphate = pyridoxine 5'-phosphate + phosphate + 2 H2O + H(+). It participates in cofactor biosynthesis; pyridoxine 5'-phosphate biosynthesis; pyridoxine 5'-phosphate from D-erythrose 4-phosphate: step 5/5. Catalyzes the complicated ring closure reaction between the two acyclic compounds 1-deoxy-D-xylulose-5-phosphate (DXP) and 3-amino-2-oxopropyl phosphate (1-amino-acetone-3-phosphate or AAP) to form pyridoxine 5'-phosphate (PNP) and inorganic phosphate. This is Pyridoxine 5'-phosphate synthase from Pelodictyon phaeoclathratiforme (strain DSM 5477 / BU-1).